A 396-amino-acid polypeptide reads, in one-letter code: KiSS-1 receptor (396 aa).

The Extracellular segment spans residues 1–43; that stretch reads MATEATLAPNVTWWAPSNASGCPGCGVNASDDPGSAPRPLDAW. Asn10, Asn18, and Asn28 each carry an N-linked (GlcNAc...) asparagine glycan. Residues 44–66 form a helical membrane-spanning segment; sequence LVPLFFATLMLLGLVGNSLVIYV. Topologically, residues 67–78 are cytoplasmic; the sequence is ICRHKHMQTVTN. The chain crosses the membrane as a helical span at residues 79–101; sequence FYIANLAATDVTFLLCCVPFTAL. Topologically, residues 102-116 are extracellular; sequence LYPLPAWVLGDFMCK. Cysteines 115 and 191 form a disulfide. A helical transmembrane segment spans residues 117-138; it reads FVNYIQQVSVQATCATLTAMSV. The Cytoplasmic portion of the chain corresponds to 139 to 157; sequence DRWYVTVFPLRALHRRTPR. The chain crosses the membrane as a helical span at residues 158–180; the sequence is LALAVSLSIWVGSAAVSAPVLAL. At 181 to 203 the chain is on the extracellular side; sequence HRLSPGPRTYCSEAFPSRALERA. A helical transmembrane segment spans residues 204 to 224; that stretch reads FALYNLLALYLLPLLATCACY. Topologically, residues 225-260 are cytoplasmic; the sequence is GAMLRHLGRAAVRPAPTDGALQGQLLAQRAGAVRTK. A helical membrane pass occupies residues 261–283; sequence VSRLVAAVVLLFAACWGPIQLFL. The Extracellular segment spans residues 284 to 305; the sequence is VLQALGPSGAWHPRSYAAYAVK. The chain crosses the membrane as a helical span at residues 306–330; that stretch reads IWAHCMSYSNSALNPLLYAFLGSHF. Topologically, residues 331 to 396 are cytoplasmic; sequence RQAFCRVCPC…CAQSERTASL (66 aa). The disordered stretch occupies residues 349-396; that stretch reads HTSAHSDRAATHTVPHSRAAHPVRIRSPEPGNPVVRSPCAQSERTASL. Residues 387-396 are compositionally biased toward polar residues; that stretch reads CAQSERTASL.

Belongs to the G-protein coupled receptor 1 family. In terms of tissue distribution, highest level in the heart and 15- and 17-day embryos. Low level in other tissues. Colocalized with gonadotropin-releasing hormone (GnRH) neurons in the hypothalamus.

The protein localises to the cell membrane. Its function is as follows. Receptor for metastin (kisspeptin-52 or kp-52), a C-terminally amidated peptide of KiSS1. KiSS1 is a metastasis suppressor protein. Activation of the receptor inhibits cell proliferation and cell migration, key characteristics of tumor metastasis. The receptor is essential for normal gonadotropin-released hormone physiology and for puberty. The hypothalamic KiSS1/KISS1R system is a pivotal factor in central regulation of the gonadotropic axis at puberty and in adulthood. Analysis of the transduction pathways activated by the receptor identifies coupling to phospholipase C and intracellular calcium release through pertussis toxin-insensitive G(q) proteins. In Mus musculus (Mouse), this protein is KiSS-1 receptor (Kiss1r).